The sequence spans 1007 residues: Beta-galactosidase A (1007 aa).

A signal peptide spans 1-18 (MKLSSACAIALLAAQAAG). Residues tyrosine 96 and 140-142 (NAE) each bind substrate. Asparagine 156 is a glycosylation site (N-linked (GlcNAc...) asparagine). Substrate is bound at residue asparagine 199. The active-site Proton donor is the glutamate 200. 2 disulfides stabilise this stretch: cysteine 205/cysteine 206 and cysteine 266/cysteine 315. Glutamate 298 acts as the Nucleophile in catalysis. Tyrosine 364 contributes to the substrate binding site. Residues asparagine 402, asparagine 422, asparagine 478, asparagine 522, asparagine 622, asparagine 739, asparagine 760, asparagine 777, asparagine 805, and asparagine 914 are each glycosylated (N-linked (GlcNAc...) asparagine).

Belongs to the glycosyl hydrolase 35 family.

Its subcellular location is the secreted. The enzyme catalyses Hydrolysis of terminal non-reducing beta-D-galactose residues in beta-D-galactosides.. Functionally, cleaves beta-linked terminal galactosyl residues from gangliosides, glycoproteins, and glycosaminoglycans. This is Beta-galactosidase A (lacA) from Aspergillus niger (strain ATCC MYA-4892 / CBS 513.88 / FGSC A1513).